We begin with the raw amino-acid sequence, 337 residues long: tRNA N6-adenosine threonylcarbamoyltransferase (337 aa).

Positions 111 and 115 each coordinate Fe cation. Substrate contacts are provided by residues 134–138, aspartate 167, glycine 180, and asparagine 272; that span reads LVSGG. Aspartate 300 is a Fe cation binding site.

This sequence belongs to the KAE1 / TsaD family. Fe(2+) serves as cofactor.

Its subcellular location is the cytoplasm. It catalyses the reaction L-threonylcarbamoyladenylate + adenosine(37) in tRNA = N(6)-L-threonylcarbamoyladenosine(37) in tRNA + AMP + H(+). Its function is as follows. Required for the formation of a threonylcarbamoyl group on adenosine at position 37 (t(6)A37) in tRNAs that read codons beginning with adenine. Is involved in the transfer of the threonylcarbamoyl moiety of threonylcarbamoyl-AMP (TC-AMP) to the N6 group of A37, together with TsaE and TsaB. TsaD likely plays a direct catalytic role in this reaction. The sequence is that of tRNA N6-adenosine threonylcarbamoyltransferase from Escherichia coli (strain K12 / MC4100 / BW2952).